Consider the following 219-residue polypeptide: Claudin-3 (219 aa).

Residues 1 to 8 (MSMGLEIT) lie on the Cytoplasmic side of the membrane. Residues 9–29 (GTSLAVLGWLCTIVCCALPMW) form a helical membrane-spanning segment. The Extracellular segment spans residues 30–80 (RVSAFIGSSIITAQITWEGLWMNCVVQSTGQMQCKMYDSLLALPQDLQAAR). A helical membrane pass occupies residues 81–101 (ALIVVSILLAAFGLLVALVGA). The Cytoplasmic segment spans residues 102-115 (QCTNCVQDETAKAK). A helical transmembrane segment spans residues 116 to 136 (ITIVAGVLFLLAAVLTLVPVS). Residues 137 to 161 (WSANTIIRDFYNPLVPEAQKREMGT) lie on the Extracellular side of the membrane. The chain crosses the membrane as a helical span at residues 162-182 (GLYVGWAAAALQLLGGALLCC). Residues 183 to 219 (SCPPREKYAPTKILYSAPRSTGPGTGTGTAYDRKDYV) lie on the Cytoplasmic side of the membrane. Tyrosine 197 is modified (phosphotyrosine). Position 198 is a phosphoserine (serine 198). The interactions with TJP1, TJP2 and TJP3 stretch occupies residues 218–219 (YV).

The protein belongs to the claudin family. Can form homo- and heteropolymers with other CLDN. Homopolymers interact with CLDN1 and CLDN2 homopolymers. Interacts in cis (within the same plasma membrane) with CLDN19. Directly interacts with TJP1/ZO-1, TJP2/ZO-2 and TJP3/ZO-3.

The protein localises to the cell junction. It localises to the tight junction. It is found in the cell membrane. In terms of biological role, plays a major role in tight junction-specific obliteration of the intercellular space, through calcium-independent cell-adhesion activity. The protein is Claudin-3 (Cldn3) of Rattus norvegicus (Rat).